The sequence spans 411 residues: Multifunctional CCA protein (411 aa).

G8 and R11 together coordinate ATP. Positions 8 and 11 each coordinate CTP. Mg(2+) contacts are provided by D21 and D23. ATP is bound by residues R91, R137, and R140. The CTP site is built by R91, R137, and R140. The HD domain maps to 228 to 333 (SGVHTLLVIE…LKVFNALDIW (106 aa)).

Belongs to the tRNA nucleotidyltransferase/poly(A) polymerase family. Bacterial CCA-adding enzyme type 1 subfamily. As to quaternary structure, monomer. Can also form homodimers and oligomers. It depends on Mg(2+) as a cofactor. Ni(2+) is required as a cofactor.

It catalyses the reaction a tRNA precursor + 2 CTP + ATP = a tRNA with a 3' CCA end + 3 diphosphate. The enzyme catalyses a tRNA with a 3' CCA end + 2 CTP + ATP = a tRNA with a 3' CCACCA end + 3 diphosphate. Functionally, catalyzes the addition and repair of the essential 3'-terminal CCA sequence in tRNAs without using a nucleic acid template. Adds these three nucleotides in the order of C, C, and A to the tRNA nucleotide-73, using CTP and ATP as substrates and producing inorganic pyrophosphate. tRNA 3'-terminal CCA addition is required both for tRNA processing and repair. Also involved in tRNA surveillance by mediating tandem CCA addition to generate a CCACCA at the 3' terminus of unstable tRNAs. While stable tRNAs receive only 3'-terminal CCA, unstable tRNAs are marked with CCACCA and rapidly degraded. This is Multifunctional CCA protein from Actinobacillus pleuropneumoniae serotype 5b (strain L20).